Consider the following 528-residue polypeptide: Glutamyl-tRNA(Gln) amidotransferase subunit A, mitochondrial (528 aa).

The active-site Charge relay system is lysine 76. The tract at residues 148-167 is disordered; it reads YREKRKQNPHSENEDSDWLI. Serine 171 (charge relay system) is an active-site residue. Residue serine 195 is the Acyl-ester intermediate of the active site.

This sequence belongs to the amidase family. GatA subfamily. Subunit of the heterotrimeric GatCAB amidotransferase (AdT) complex, composed of A (QRSL1), B (GATB) and C (GATC) subunits.

It is found in the mitochondrion. The enzyme catalyses L-glutamyl-tRNA(Gln) + L-glutamine + ATP + H2O = L-glutaminyl-tRNA(Gln) + L-glutamate + ADP + phosphate + H(+). Its function is as follows. Allows the formation of correctly charged Gln-tRNA(Gln) through the transamidation of misacylated Glu-tRNA(Gln) in the mitochondria. The reaction takes place in the presence of glutamine and ATP through an activated gamma-phospho-Glu-tRNA(Gln). This Homo sapiens (Human) protein is Glutamyl-tRNA(Gln) amidotransferase subunit A, mitochondrial.